Here is an 85-residue protein sequence, read N- to C-terminus: Small ribosomal subunit protein bS18 (85 aa).

The protein belongs to the bacterial ribosomal protein bS18 family. Part of the 30S ribosomal subunit. Forms a tight heterodimer with protein bS6.

Functionally, binds as a heterodimer with protein bS6 to the central domain of the 16S rRNA, where it helps stabilize the platform of the 30S subunit. This Solidesulfovibrio magneticus (strain ATCC 700980 / DSM 13731 / RS-1) (Desulfovibrio magneticus) protein is Small ribosomal subunit protein bS18.